The primary structure comprises 1087 residues: Voltage-gated inwardly rectifying potassium channel KCNH3 (1087 aa).

Residues 1–228 (MPAMRGLLAP…HCGALRATWD (228 aa)) are Cytoplasmic-facing. The PAS domain occupies 18 to 90 (IATRFDGTHS…QQIRKALDEH (73 aa)). A PAC domain is found at 93–145 (FKAELILYRKSGLPFWCLLDVIPIKNEKGEVALFLVSHKDISETKNRGGPDNW). Residues 137 to 150 (KNRGGPDNWKERGG) are compositionally biased toward basic and acidic residues. The tract at residues 137–161 (KNRGGPDNWKERGGGRRRYGRAGSK) is disordered. A helical transmembrane segment spans residues 229–249 (GFILLATLYVAVTVPYSVCVS). The Extracellular segment spans residues 250–259 (TAREPSAARG). A helical membrane pass occupies residues 260-280 (PPSVCDLAVEVLFILDIVLNF). At 281 to 302 (RTTFVSKSGQVVFAPKSICLHY) the chain is on the cytoplasmic side. A helical membrane pass occupies residues 303–323 (VTTWFLLDVIAALPFDLLHAF). The Extracellular segment spans residues 324-331 (KVNVYVGA). Residues 332 to 352 (HLLKTVRLLRLLRLLPRLDRY) traverse the membrane as a helical; Voltage-sensor segment. At 353 to 361 (SQYSAVVLT) the chain is on the cytoplasmic side. The chain crosses the membrane as a helical span at residues 362 to 382 (LLMAVFALLAHWVACVWFYIG). Topologically, residues 383 to 456 (QQEIENSESE…GGPSLRSAYI (74 aa)) are extracellular. A disordered region spans residues 416-436 (SPDGGNSSGQSENCSSSGGGS). Residues 419–431 (GGNSSGQSENCSS) are compositionally biased toward low complexity. Residues N421, N428, and N439 are each glycosylated (N-linked (GlcNAc...) asparagine). The segment at residues 457 to 477 (TSLYFALSSLTSVGFGNVSAN) is an intramembrane region (pore-forming). A Selectivity filter motif is present at residues 468 to 473 (SVGFGN). Residues 478–482 (TDTEK) are Extracellular-facing. A helical membrane pass occupies residues 483–503 (IFSICTMLIGALMHAVVFGNV). Over 504–1087 (TAIIQRMYAR…QWTQEEGTGV (584 aa)) the chain is Cytoplasmic. 585–700 (LFEAASRGCL…FAPRFSRGLR (116 aa)) is a binding site for a nucleoside 3',5'-cyclic phosphate. 2 disordered regions span residues 733 to 813 (EKET…LQLP) and 975 to 1061 (LMAP…PWDP). The span at 776–788 (TAPRPRLGGRGRP) shows a compositional bias: basic residues.

This sequence belongs to the potassium channel family. H (Eag) (TC 1.A.1.20) subfamily. Kv12.2/KCNH3 sub-subfamily. The potassium channel is probably composed of a homo- or heterotetrameric complex of pore-forming alpha subunits that can associate with modulating beta subunits. Interacts with KCNE1 and KCNE3; these interactions regulate KCNH3 trafficking to the plasma membrane and its subsequent voltage-gated potassium channel activity. In terms of processing, N-glycosylated. N-glycosylation mediates traffick to the cell membrane but is not necessary for voltage-gated potassium channel activity. Highly expressed in adult and embryonic brain, in particular in cerebellum, brain stem, hippocampus, cortex and striatum. Also found in pituitary.

It localises to the cell membrane. The catalysed reaction is K(+)(in) = K(+)(out). Pore-forming (alpha) subunit of a voltage-gated inwardly rectifying potassium channel. Charactherized by a fast rate of activation during depolarization followed by a rapid inactivation at much more depolarized value causing inward rectification due to a C-type inactivation mechanism. Exhibits a rapid recovery from inactivation. This is Voltage-gated inwardly rectifying potassium channel KCNH3 from Rattus norvegicus (Rat).